Reading from the N-terminus, the 152-residue chain is Large ribosomal subunit protein uL13 (152 aa).

Belongs to the universal ribosomal protein uL13 family. Part of the 50S ribosomal subunit.

In terms of biological role, this protein is one of the early assembly proteins of the 50S ribosomal subunit, although it is not seen to bind rRNA by itself. It is important during the early stages of 50S assembly. This chain is Large ribosomal subunit protein uL13, found in Wolbachia sp. subsp. Drosophila simulans (strain wRi).